A 470-amino-acid chain; its full sequence is FLYWCH transcription factor 2 (470 aa).

Positions 102 to 148 are disordered; it reads SQLISEDTRPSASSSPSSTATAVSNSGQSNATSTSSSSTEPEYKPRN. Residues 111-140 are compositionally biased toward low complexity; the sequence is PSASSSPSSTATAVSNSGQSNATSTSSSST. An FLYWCH-type zinc finger spans residues 145 to 204; it reads KPRNVREKVYADGYIMSFDKKSCCGTKEFWRCERKNDCNARMHSDINTREIVRKLHPHNH.

Functionally, probable transcription factor. May bind to the promoters of target genes, including micro-RNA genes, in order to repress expression, and acting redundantly with flh-1 and flh-3. The polypeptide is FLYWCH transcription factor 2 (Caenorhabditis elegans).